The primary structure comprises 369 residues: Protein pxr-1 (369 aa).

The disordered stretch occupies residues 1 to 23 (MGLAAAKNKRKLGTDPNNTKWSR). The region spanning 25–79 (ETTFGQKILRAQGWQPGEFLGAKDAAHAVHHTEASSSHIKVTLKDDNLGLGAKRN) is the G-patch domain. A disordered region spans residues 147–338 (EEDGVPQSDT…GTSTPTVTSS (192 aa)). Residues 153-167 (QSDTVDQQVETVPSQ) are compositionally biased toward polar residues. Positions 218–227 (SKKKEKKDKK) are enriched in basic residues. Residues 228-237 (EKKDQKEKKD) are compositionally biased toward basic and acidic residues. Basic residues predominate over residues 267 to 292 (KSKKDKKKEKKEKKDKKKDKKEKKRK). Residues 304-318 (EDSKSKAQKRTKDGA) show a composition bias toward basic and acidic residues. The span at 322–338 (TSTPGGSGTSTPTVTSS) shows a compositional bias: low complexity.

The protein belongs to the PINX1 family.

The protein resides in the nucleus. It is found in the nucleolus. In terms of biological role, involved in rRNA-processing at A0, A1 and A2 sites and negatively regulates telomerase. The protein is Protein pxr-1 (pxr-1) of Neurospora crassa (strain ATCC 24698 / 74-OR23-1A / CBS 708.71 / DSM 1257 / FGSC 987).